The sequence spans 581 residues: Leucine-rich repeat-containing protein 15 (581 aa).

The first 21 residues, 1-21, serve as a signal peptide directing secretion; it reads MPLKHYLLLLVGCQAWGAGLA. In terms of domain architecture, LRRNT spans 22-53; it reads YHGCPSECTCSRASQVECTGARIVAVPTPLPW. Over 22–538 the chain is Extracellular; it reads YHGCPSECTC…VWGMTQAQSG (517 aa). 15 LRR repeats span residues 54–75, 78–99, 102–123, 126–147, 150–171, 174–195, 198–219, 222–243, 246–267, 270–291, 294–315, 318–339, 342–363, 366–387, and 390–411; these read NAMSLQILNTHITELNESPFLN, ALIALRIEKNELSRITPGAFRN, SLRYLSLANNKLQVLPIGLFQG, SLESLLLSSNQLLQIQPAHFSQ, NLKELQLHGNHLEYIPDGAFDH, GLTKLNLGKNSLTHISPRVFQH, NLQVLRLYENRLTDIPMGTFDG, NLQELALQQNQIGLLSPGLFHN, NLQRLYLSNNHISQLPPSVFMQ, QLNRLTLFGNSLKELSPGIFGP, NLRELWLYDNHISSLPDNVFSN, QLQVLILSRNQISFISPGAFNG, ELRELSLHTNALQDLDGNVFRM, NLQNISLQNNRLRQLPGNIFAN, and GLMAIQLQNNQLENLPLGIFDH. Asn-75 carries N-linked (GlcNAc...) asparagine glycosylation. Asn-369 carries N-linked (GlcNAc...) asparagine glycosylation. The region spanning 423-475 is the LRRCT domain; sequence NPWRCDSDILPLRNWLLLNQPRLGTDTVPVCFSPANVRGQSLIIINVNVAVPS. The disordered stretch occupies residues 489-509; sequence WYPDTPSYPDTTSVSSTTELT. Positions 499 to 509 are enriched in low complexity; sequence TTSVSSTTELT. A helical membrane pass occupies residues 539 to 559; the sequence is LAIAAIVIGIVALACSLAACV. Topologically, residues 560 to 581 are cytoplasmic; it reads GCCCCKKRSQAVLMQMKAPNEC.

(Microbial infection) Interacts with human coronavirus SARS-CoV-2 spike protein (via RBD domain); the interaction is direct and sequesters virions at the cell surface. In terms of assembly, (Microbial infection) Interacts with human coronavirus SARS-CoV-2 spike protein (via RBD domain); the interaction is direct. In terms of tissue distribution, expressed in brain and placenta. Expressed in lung fibroblasts. Expressed in chodrocytes.

Its subcellular location is the cell membrane. In terms of biological role, (Microbial infection) Modulates the ability of SARS-CoV-2 to infect host cells through interaction with the spike protein. Does not act as a SARS-CoV-2 entry receptor but sequesters virions and antagonizes in trans SARS-CoV-2 infection of ACE2(+) cells when expressed on nearby cells. The chain is Leucine-rich repeat-containing protein 15 (LRRC15) from Homo sapiens (Human).